A 191-amino-acid chain; its full sequence is Protein Ves (191 aa).

This sequence belongs to the Ves family.

The sequence is that of Protein Ves from Escherichia coli (strain K12 / MC4100 / BW2952).